The sequence spans 253 residues: PAXIP1-associated glutamate-rich protein 1A (253 aa).

2 disordered regions span residues 1-108 and 126-253; these read MSLA…MPPP and LQAE…QRKY. A compositionally biased stretch (basic and acidic residues) spans 45–66; the sequence is KAEEEGKGSQEEAGREGSRPEE. Residues 115 to 159 are sufficient for interaction with NCOA1; it reads YELLATQGTLELQAEILPRRPPTPEAQSEEERSDEEPEAKEEEEE. Thr-137 is subject to Phosphothreonine. Over residues 141 to 158 the composition is skewed to acidic residues; that stretch reads QSEEERSDEEPEAKEEEE. A phosphoserine mark is found at Ser-142 and Ser-147. The segment at 160–253 is sufficient for interaction with ESR1; sequence KPHMPTEFDF…NSLFPRQRKY (94 aa). Residues 194 to 222 are compositionally biased toward basic and acidic residues; it reads QKREARLDKVLSDMKRHKKLEEQILRTGR. At Ser-236 the chain carries Phosphoserine. Positions 238–247 are enriched in polar residues; that stretch reads PLRSSGNSLF.

In terms of assembly, component of the KMT2 family MLL2/MLL3 complex, at least composed of the histone methyltransferases KMT2D and/or KMT2C, the common subunits ASH2L, RBBP5, WDR5 and DPY30, and the complex type-specific subunits PAXIP1/PTIP, PAGR1, NCOA6 and KDM6A; PAXIP1 is required for the association with the MLL2/MLL3 complex. Forms a constitutive complex with PAXIP1/PTIP independently of the MLL2/MLL3 complex. Interacts with NCOA1, ESR1, NR3C1, AR.

The protein localises to the nucleus. Functionally, its association with the histone methyltransferase MLL2/MLL3 complex is suggesting a role in epigenetic transcriptional activation. However, in association with PAXIP1/PTIP is proposed to function at least in part independently of the MLL2/MLL3 complex. Proposed to be recruited by PAXIP1 to sites of DNA damage where the PAGR1:PAXIP1 complex is required for cell survival in response to DNA damage independently of the MLL2/MLL3 complex. However, its function in DNA damage has been questioned. During immunoglobulin class switching in activated B-cells is involved in transcription regulation of downstream switch regions at the immunoglobulin heavy-chain (Igh) locus independently of the MLL2/MLL3 complex. Involved in both estrogen receptor-regulated gene transcription and estrogen-stimulated G1/S cell-cycle transition. Acts as a transcriptional cofactor for nuclear hormone receptors. Inhibits the induction properties of several steroid receptors such as NR3C1, AR and PPARG; the mechanism of inhibition appears to be gene-dependent. May be involved in the regulation of the BMP pathway in extraembryonic development. The protein is PAXIP1-associated glutamate-rich protein 1A of Mus musculus (Mouse).